A 500-amino-acid chain; its full sequence is NAD(P)H-quinone oxidoreductase chain 4, chloroplastic (500 aa).

Transmembrane regions (helical) follow at residues 4–24, 37–57, 87–107, 113–130, 134–154, 167–187, 211–231, 242–262, 272–292, 313–333, 334–354, 386–406, 417–437, and 462–482; these read FPWL…IFFL, MSIC…HFQL, LGSI…AWPV, LFYF…GLFS, LLLF…LLSM, FILY…GMGL, ILFY…IPLH, HYST…YGLI, AHYL…IYAA, MGFI…GAIL, QILS…TACD, LALP…GLIT, LITF…LSML, and LFLL…PDFV.

The protein belongs to the complex I subunit 4 family.

Its subcellular location is the plastid. The protein localises to the chloroplast thylakoid membrane. The catalysed reaction is a plastoquinone + NADH + (n+1) H(+)(in) = a plastoquinol + NAD(+) + n H(+)(out). It carries out the reaction a plastoquinone + NADPH + (n+1) H(+)(in) = a plastoquinol + NADP(+) + n H(+)(out). The chain is NAD(P)H-quinone oxidoreductase chain 4, chloroplastic from Oryza nivara (Indian wild rice).